The chain runs to 149 residues: Flagellar assembly factor FliW (149 aa).

Belongs to the FliW family. As to quaternary structure, interacts with translational regulator CsrA and flagellin(s).

The protein resides in the cytoplasm. In terms of biological role, acts as an anti-CsrA protein, binds CsrA and prevents it from repressing translation of its target genes, one of which is flagellin. Binds to flagellin and participates in the assembly of the flagellum. The protein is Flagellar assembly factor FliW of Thermotoga neapolitana (strain ATCC 49049 / DSM 4359 / NBRC 107923 / NS-E).